The chain runs to 157 residues: Probable intracellular pathogenesis-related protein T1 (157 aa).

N-linked (GlcNAc...) asparagine glycans are attached at residues asparagine 79 and asparagine 117.

Belongs to the BetVI family.

The polypeptide is Probable intracellular pathogenesis-related protein T1 (PCKR3) (Catharanthus roseus (Madagascar periwinkle)).